The chain runs to 87 residues: Small ribosomal subunit protein bS20 (87 aa).

Residues 1–27 show a composition bias toward basic residues; the sequence is MANIKSAKKRALQSERRRQHNASRRSM. The interval 1 to 31 is disordered; the sequence is MANIKSAKKRALQSERRRQHNASRRSMTRTS.

This sequence belongs to the bacterial ribosomal protein bS20 family.

In terms of biological role, binds directly to 16S ribosomal RNA. This Pseudoalteromonas atlantica (strain T6c / ATCC BAA-1087) protein is Small ribosomal subunit protein bS20.